The following is a 1336-amino-acid chain: Vascular endothelial growth factor receptor 1 (1336 aa).

A signal peptide spans 1–22; that stretch reads MVSCWDTAVLPCALLGCLLLTG. The Extracellular segment spans residues 23-758; that stretch reads YCSGSKLKGP…QGTSDKSNLE (736 aa). 7 consecutive Ig-like C2-type domains span residues 32–121, 151–214, 230–327, 335–421, 429–549, 556–655, and 661–747; these read PELS…KKME, GREL…VNGH, LDVQ…TSVH, SVKH…LTAT, QIYE…RDIR, PNGF…EVLV, and PLLL…AYLT. Intrachain disulfides connect Cys53/Cys107 and Cys158/Cys207. Asn100, Asn164, Asn196, and Asn251 each carry an N-linked (GlcNAc...) asparagine glycan. Cysteines 252 and 311 form a disulfide. Residues Asn323, Asn417, Asn474, Asn516, Asn597, Asn625, Asn666, and Asn713 are each glycosylated (N-linked (GlcNAc...) asparagine). 2 disulfides stabilise this stretch: Cys454/Cys535 and Cys577/Cys636. Cysteines 682 and 731 form a disulfide. Residues 759–780 traverse the membrane as a helical segment; that stretch reads LITLTCTCVAATLFWLLLTLFI. At 781–1336 the chain is on the cytoplasmic side; it reads RKLKRSSSEV…SVVLYSSPPA (556 aa). The region spanning 827-1158 is the Protein kinase domain; sequence LKLGKSLGRG…ELVEKLGDLL (332 aa). Residues 833–841 and Lys861 contribute to the ATP site; that span reads LGRGAFGKV. Tyr914 is subject to Phosphotyrosine; by autocatalysis. Over residues 941–957 the composition is skewed to basic and acidic residues; that stretch reads KKEKLEPDLEQDQKPRL. Positions 941-982 are disordered; it reads KKEKLEPDLEQDQKPRLDSVSSSESFTSSGFQEDKSVSDVEG. Low complexity predominate over residues 959–969; sequence SVSSSESFTSS. The active-site Proton acceptor is the Asp1022. A phosphotyrosine; by autocatalysis mark is found at Tyr1053, Tyr1169, Tyr1213, Tyr1242, Tyr1325, and Tyr1331. Residues 1304 to 1326 form a disordered region; that stretch reads RQEDEDDPELGKESCCSPPPDYN.

Belongs to the protein kinase superfamily. Tyr protein kinase family. CSF-1/PDGF receptor subfamily. As to quaternary structure, interacts with VEGFA, VEGFB and PGF. Monomer in the absence of bound VEGFA, VEGFB or PGF. Homodimer in the presence of bound VEGFA, VEGFB and PGF. Can also form a heterodimer with KDR. Interacts (tyrosine phosphorylated) with CBL, CRK, GRB2, NCK1, PIK3R1, PLCG, PSEN1 and PTPN11. Probably interacts with PTPRB. Interacts with RACK1. Identified in a complex with CBL and CD2AP. In terms of processing, N-glycosylated. Post-translationally, ubiquitinated after VEGFA-mediated autophosphorylation, leading to proteolytic degradation. Autophosphorylated on tyrosine residues upon ligand binding. Autophosphorylation occurs in trans, i.e. one subunit of the dimeric receptor phosphorylates tyrosine residues on the other subunit. Phosphorylation at Tyr-1169 is important for interaction with PLCG. Phosphorylation at Tyr-1213 is important for interaction with PIK3R1, PTPN11, GRB2, and PLCG. Phosphorylation at Tyr-1331 is important for endocytosis and for interaction with CBL, NCK1 and CRK. Is probably dephosphorylated by PTPRB.

It is found in the cell membrane. It localises to the endosome. The enzyme catalyses L-tyrosyl-[protein] + ATP = O-phospho-L-tyrosyl-[protein] + ADP + H(+). Present in an inactive conformation in the absence of bound ligand. Binding of VEGFA, VEGFB or PGF leads to dimerization and activation by autophosphorylation on tyrosine residues. Its function is as follows. Tyrosine-protein kinase that acts as a cell-surface receptor for VEGFA, VEGFB and PGF, and plays an essential role in the development of embryonic vasculature, the regulation of angiogenesis, cell survival, cell migration, macrophage function, chemotaxis, and cancer cell invasion. Acts as a positive regulator of postnatal retinal hyaloid vessel regression. May play an essential role as a negative regulator of embryonic angiogenesis by inhibiting excessive proliferation of endothelial cells. Can promote endothelial cell proliferation, survival and angiogenesis in adulthood. Its function in promoting cell proliferation seems to be cell-type specific. Promotes PGF-mediated proliferation of endothelial cells, and proliferation of some types of cancer cells, but does not promote proliferation of normal fibroblasts. Has very high affinity for VEGFA and relatively low protein kinase activity; may function as a negative regulator of VEGFA signaling by limiting the amount of free VEGFA and preventing its binding to KDR. Modulates KDR signaling by forming heterodimers with KDR. Ligand binding leads to the activation of several signaling cascades. Activation of PLCG leads to the production of the cellular signaling molecules diacylglycerol and inositol 1,4,5-trisphosphate and the activation of protein kinase C. Mediates phosphorylation of PIK3R1, the regulatory subunit of phosphatidylinositol 3-kinase, leading to the activation of phosphatidylinositol kinase and the downstream signaling pathway. Mediates activation of MAPK1/ERK2, MAPK3/ERK1 and the MAP kinase signaling pathway, as well as of the AKT1 signaling pathway. Phosphorylates SRC, YES1 and PLCG, and may also phosphorylate CBL. Promotes phosphorylation of AKT1 and PTK2/FAK1. This Rattus norvegicus (Rat) protein is Vascular endothelial growth factor receptor 1 (Flt1).